The primary structure comprises 247 residues: 7-cyano-7-deazaguanine synthase (247 aa).

21 to 31 provides a ligand contact to ATP; sequence FSGGQDSTACL. The Zn(2+) site is built by Cys-209, Cys-224, Cys-227, and Cys-230.

Belongs to the QueC family. The cofactor is Zn(2+).

It carries out the reaction 7-carboxy-7-deazaguanine + NH4(+) + ATP = 7-cyano-7-deazaguanine + ADP + phosphate + H2O + H(+). Its pathway is purine metabolism; 7-cyano-7-deazaguanine biosynthesis. In terms of biological role, catalyzes the ATP-dependent conversion of 7-carboxy-7-deazaguanine (CDG) to 7-cyano-7-deazaguanine (preQ(0)). This is 7-cyano-7-deazaguanine synthase from Halorhodospira halophila (strain DSM 244 / SL1) (Ectothiorhodospira halophila (strain DSM 244 / SL1)).